The following is a 739-amino-acid chain: Gamma-tubulin complex component 4 homolog (739 aa).

Belongs to the TUBGCP family.

The protein resides in the cytoplasm. It is found in the cytoskeleton. Its subcellular location is the microtubule organizing center. Functionally, gamma-tubulin complex is necessary for microtubule nucleation at the microtubule organizing centers (MTOCs). The polypeptide is Gamma-tubulin complex component 4 homolog (85P) (Medicago truncatula (Barrel medic)).